A 343-amino-acid polypeptide reads, in one-letter code: Transmembrane protein 120A (343 aa).

Residues 1–132 are Cytoplasmic-facing; it reads MHPPPPGPLG…KQAKFAYKDE (132 aa). CoA is bound at residue lysine 130. The helical transmembrane segment at 133–152 threads the bilayer; the sequence is YEKFKLYLTIILILISFTCR. At 153 to 158 the chain is on the extracellular side; the sequence is FLLNSR. A helical membrane pass occupies residues 159 to 177; sequence VTDAAFNFLLVWYYCTLTI. At 178–190 the chain is on the cytoplasmic side; it reads RESILINNGSRIK. CoA contacts are provided by serine 187 and arginine 188. The helical transmembrane segment at 191 to 209 threads the bilayer; it reads GWWVFHHYVSTFLSGVMLT. The Extracellular portion of the chain corresponds to 210–218; sequence WPDGLMYQK. The chain crosses the membrane as a helical span at residues 219-240; that stretch reads FRNQFLSFSMYQSFVQFLQYYY. CoA-binding residues include glutamine 237, tyrosine 240, glutamine 241, and histidine 283. At 241–270 the chain is on the cytoplasmic side; the sequence is QSGCLYRLRALGERHTMDLTVEGFQSWMWR. Residues 271–294 traverse the membrane as a helical segment; sequence GLTFLLPFLFFGHFWQLFNALTLF. At 295 to 304 the chain is on the extracellular side; that stretch reads NLARDPECKE. Residues 305 to 330 traverse the membrane as a helical segment; the sequence is WQVLMCGFPFLLLFLGNFFTTLRVVH. The Cytoplasmic segment spans residues 331 to 343; that stretch reads QKFHNQLHGSKKE. Lysine 332 is a binding site for CoA.

It belongs to the TMEM120 family. Homodimer. Forms heterooligomer with TMEM120B. Interacts with PKD2; TMEM120A inhibits PKD2 channel activity through the physical association of PKD2 with TMEM120A.

Its subcellular location is the cell membrane. The protein localises to the nucleus inner membrane. It is found in the endoplasmic reticulum. Its function is as follows. Multifunctional protein involved in mechanosensation, and plays an essential role in lipid metabolism and adipocyte differentiation. May function as an ion channel involved in sensing mechanical stimuli. Mediates the mechanosensitivity of the PKD2-TMEM120A channel complex through direct physical interaction. TMEM120A seems to affect mechanosensation by inhibiting PIEZO2 channels, possibly by altering cellular lipid content. TMEM120A is structurally similar to a lipid-modifying enzyme, ELOVL7, and contains a bound coenzyme A molecule, which suggests it might function as an enzyme in lipid metabolism. Additionnaly, implicated in innate immune response against Zika virus. Acts as a key activator of the antiviral signaling involving STING1. This Bos taurus (Bovine) protein is Transmembrane protein 120A.